Here is a 636-residue protein sequence, read N- to C-terminus: Threonine--tRNA ligase (636 aa).

The TGS domain maps to 1–61; sequence MINITLPDGK…ETDASVVFIT (61 aa). Positions 238-528 are catalytic; it reads DHRKLGTALD…LIEHYAGKFP (291 aa). Residues cysteine 329, histidine 380, and histidine 505 each coordinate Zn(2+).

This sequence belongs to the class-II aminoacyl-tRNA synthetase family. Homodimer. Zn(2+) is required as a cofactor.

Its subcellular location is the cytoplasm. It catalyses the reaction tRNA(Thr) + L-threonine + ATP = L-threonyl-tRNA(Thr) + AMP + diphosphate + H(+). Its function is as follows. Catalyzes the attachment of threonine to tRNA(Thr) in a two-step reaction: L-threonine is first activated by ATP to form Thr-AMP and then transferred to the acceptor end of tRNA(Thr). Also edits incorrectly charged L-seryl-tRNA(Thr). This Desulfatibacillum aliphaticivorans protein is Threonine--tRNA ligase.